A 68-amino-acid chain; its full sequence is ATP synthase F(0) complex subunit 8 (68 aa).

A helical transmembrane segment spans residues 8–24; sequence TWSITIVSMIITLFIMF. Lysine 54 is modified (N6-acetyllysine; alternate). N6-succinyllysine; alternate is present on lysine 54. Residue lysine 57 is modified to N6-acetyllysine.

Belongs to the ATPase protein 8 family. Component of the ATP synthase complex composed at least of ATP5F1A/subunit alpha, ATP5F1B/subunit beta, ATP5MC1/subunit c (homooctomer), MT-ATP6/subunit a, MT-ATP8/subunit 8, ATP5ME/subunit e, ATP5MF/subunit f, ATP5MG/subunit g, ATP5MK/subunit k, ATP5MJ/subunit j, ATP5F1C/subunit gamma, ATP5F1D/subunit delta, ATP5F1E/subunit epsilon, ATP5PF/subunit F6, ATP5PB/subunit b, ATP5PD/subunit d, ATP5PO/subunit OSCP. ATP synthase complex consists of a soluble F(1) head domain (subunits alpha(3) and beta(3)) - the catalytic core - and a membrane F(0) domain - the membrane proton channel (subunits c, a, 8, e, f, g, k and j). These two domains are linked by a central stalk (subunits gamma, delta, and epsilon) rotating inside the F1 region and a stationary peripheral stalk (subunits F6, b, d, and OSCP). Interacts with PRICKLE3.

The protein resides in the mitochondrion membrane. Subunit 8, of the mitochondrial membrane ATP synthase complex (F(1)F(0) ATP synthase or Complex V) that produces ATP from ADP in the presence of a proton gradient across the membrane which is generated by electron transport complexes of the respiratory chain. ATP synthase complex consist of a soluble F(1) head domain - the catalytic core - and a membrane F(1) domain - the membrane proton channel. These two domains are linked by a central stalk rotating inside the F(1) region and a stationary peripheral stalk. During catalysis, ATP synthesis in the catalytic domain of F(1) is coupled via a rotary mechanism of the central stalk subunits to proton translocation. In vivo, can only synthesize ATP although its ATP hydrolase activity can be activated artificially in vitro. Part of the complex F(0) domain. This Ceratotherium simum (White rhinoceros) protein is ATP synthase F(0) complex subunit 8.